The sequence spans 190 residues: MAREPREGRGGREREADDIIDKLVTINRVAKVVKGGRRFAFAALVVVGDQKGRVGYGAGKAREVPEAIRKATERAKRSMIRVPMKEGRTLHHDVYGHFGAGKVVLRSATAGTGIIAGGPMRAVFESLGIGDVVAKSLGSRNPHNMVKATFAALERCSSPRSVASRRGKKVSDILGRREPVAGQEGEEAHA.

The S5 DRBM domain maps to 19–82 (IIDKLVTINR…ERAKRSMIRV (64 aa)). Residues 161–190 (SVASRRGKKVSDILGRREPVAGQEGEEAHA) are disordered. The span at 169–179 (KVSDILGRREP) shows a compositional bias: basic and acidic residues.

Belongs to the universal ribosomal protein uS5 family. As to quaternary structure, part of the 30S ribosomal subunit. Contacts proteins S4 and S8.

In terms of biological role, with S4 and S12 plays an important role in translational accuracy. Functionally, located at the back of the 30S subunit body where it stabilizes the conformation of the head with respect to the body. This is Small ribosomal subunit protein uS5 from Granulibacter bethesdensis (strain ATCC BAA-1260 / CGDNIH1).